Here is a 752-residue protein sequence, read N- to C-terminus: Pentatricopeptide repeat-containing protein At5g13270, chloroplastic (752 aa).

A chloroplast-targeting transit peptide spans 1-80 (MTILTVQSSF…LQEMDKAGVS (80 aa)). PPR repeat units follow at residues 47-81 (QGQVENLHLVSLSKHRKLNEAFEFLQEMDKAGVSV), 82-116 (SSYSYQCLFEACRELRSLSHGRLLHDRMRMGIENP), 117-147 (SVLLQNCVLQMYCECRSLEDADKLFDEMSEL), 148-182 (NAVSRTTMISAYAEQGILDKAVGLFSGMLASGDKP), 183-217 (PSSMYTTLLKSLVNPRALDFGRQIHAHVIRAGLCS), 218-248 (NTSIETGIVNMYVKCGWLVGAKRVFDQMAVK), 249-283 (KPVACTGLMVGYTQAGRARDALKLFVDLVTEGVEW), 284-318 (DSFVFSVVLKACASLEELNLGKQIHACVAKLGLES), 319-349 (EVSVGTPLVDFYIKCSSFESACRAFQEIREP), 350-384 (NDVSWSAIISGYCQMSQFEEAVKTFKSLRSKNASI), 386-420 (NSFTYTSIFQACSVLADCNIGGQVHADAIKRSLIG), 421-451 (SQYGESALITMYSKCGCLDDANEVFESMDNP), 452-486 (DIVAWTAFISGHAYYGNASEALRLFEKMVSCGMKP), 487-522 (NSVTFIAVLTACSHAGLVEQGKHCLDTMLRKYNVAP), and 523-553 (TIDHYDCMIDIYARSGLLDEALKFMKNMPFE). The segment at 558–633 (SWKCFLSGCW…ELSCSWIQEK (76 aa)) is type E motif. The segment at 634 to 664 (GKIHRFIVGDKHHPQTQEIYEKLKEFDGFME) is type E(+) motif. Residues 665–752 (GDMFQCNMTE…EGKCSCNDYW (88 aa)) form a type DYW motif region.

This sequence belongs to the PPR family. PCMP-H subfamily.

The protein localises to the plastid. It is found in the chloroplast. This chain is Pentatricopeptide repeat-containing protein At5g13270, chloroplastic (PCMP-H90), found in Arabidopsis thaliana (Mouse-ear cress).